The primary structure comprises 108 residues: uncharacterized protein (108 aa).

A helical transmembrane segment spans residues 64–84 (LFIIYYYYYLLICLSPHFFPI).

It localises to the membrane. This is an uncharacterized protein from Schizosaccharomyces pombe (strain 972 / ATCC 24843) (Fission yeast).